The chain runs to 489 residues: Glycogen synthase (489 aa).

Arginine 20 provides a ligand contact to ADP-alpha-D-glucose.

Belongs to the glycosyltransferase 1 family. Bacterial/plant glycogen synthase subfamily.

It catalyses the reaction [(1-&gt;4)-alpha-D-glucosyl](n) + ADP-alpha-D-glucose = [(1-&gt;4)-alpha-D-glucosyl](n+1) + ADP + H(+). The protein operates within glycan biosynthesis; glycogen biosynthesis. Synthesizes alpha-1,4-glucan chains using ADP-glucose. This Chlorobium chlorochromatii (strain CaD3) protein is Glycogen synthase.